The sequence spans 204 residues: Holliday junction branch migration complex subunit RuvA (204 aa).

The interval 1–64 is domain I; the sequence is MIGRLRGIIL…EDAQLLFGFN (64 aa). The domain II stretch occupies residues 65–143; that stretch reads SKPERALFRE…GMHGDLFASD (79 aa). The segment at 144–155 is flexible linker; the sequence is APFALTSEMPKE. The segment at 156–204 is domain III; that stretch reads TANDAEGEAVAALTALGYKPQEASRMIVKVGKPDADCETLIREALRAAI.

It belongs to the RuvA family. Homotetramer. Forms an RuvA(8)-RuvB(12)-Holliday junction (HJ) complex. HJ DNA is sandwiched between 2 RuvA tetramers; dsDNA enters through RuvA and exits via RuvB. An RuvB hexamer assembles on each DNA strand where it exits the tetramer. Each RuvB hexamer is contacted by two RuvA subunits (via domain III) on 2 adjacent RuvB subunits; this complex drives branch migration. In the full resolvosome a probable DNA-RuvA(4)-RuvB(12)-RuvC(2) complex forms which resolves the HJ.

Its subcellular location is the cytoplasm. In terms of biological role, the RuvA-RuvB-RuvC complex processes Holliday junction (HJ) DNA during genetic recombination and DNA repair, while the RuvA-RuvB complex plays an important role in the rescue of blocked DNA replication forks via replication fork reversal (RFR). RuvA specifically binds to HJ cruciform DNA, conferring on it an open structure. The RuvB hexamer acts as an ATP-dependent pump, pulling dsDNA into and through the RuvAB complex. HJ branch migration allows RuvC to scan DNA until it finds its consensus sequence, where it cleaves and resolves the cruciform DNA. This is Holliday junction branch migration complex subunit RuvA from Erwinia tasmaniensis (strain DSM 17950 / CFBP 7177 / CIP 109463 / NCPPB 4357 / Et1/99).